Reading from the N-terminus, the 442-residue chain is Trigger factor (442 aa).

A PPIase FKBP-type domain is found at 163–248 (NDLVTINYCI…ILNVEEKQEN (86 aa)).

It belongs to the FKBP-type PPIase family. Tig subfamily.

The protein resides in the cytoplasm. The catalysed reaction is [protein]-peptidylproline (omega=180) = [protein]-peptidylproline (omega=0). Functionally, involved in protein export. Acts as a chaperone by maintaining the newly synthesized protein in an open conformation. Functions as a peptidyl-prolyl cis-trans isomerase. This chain is Trigger factor, found in Buchnera aphidicola subsp. Schizaphis graminum (strain Sg).